The chain runs to 1065 residues: Outer capsid protein VP3 (1065 aa).

The protein resides in the virion. The catalysed reaction is a 5'-end diphospho-ribonucleoside in mRNA + GTP + H(+) = a 5'-end (5'-triphosphoguanosine)-ribonucleoside in mRNA + diphosphate. The enzyme catalyses a 5'-end (5'-triphosphoguanosine)-ribonucleoside in mRNA + S-adenosyl-L-methionine = a 5'-end (N(7)-methyl 5'-triphosphoguanosine)-ribonucleoside in mRNA + S-adenosyl-L-homocysteine. Functionally, outer capsid protein involved in mRNA capping. Catalyzes the last 3 enzymatic activities for formation of the 5' cap structure on the viral plus-strand transcripts, namely the RNA guanylyltransferase, RNA-7N- and RNA-2'O-methyltransferase activities. The protein is Outer capsid protein VP3 (S3) of Cryphonectria parasitica mycoreovirus 1 (strain 9B21) (CpMYRV-1).